Consider the following 610-residue polypeptide: Probable pleckstrin homology domain-containing family N member 1 (610 aa).

Residues 1–30 (MGNSHCVPQAPRRLRASFSRKPSLKGNRED) are disordered. The N-myristoyl glycine moiety is linked to residue Gly2. The segment at 61 to 100 (TDIPGPEHHPENLEQPFLSVFKKGWRRTPVRNLGKVVHYS) is interaction with C1QBP. 2 PH domains span residues 96–192 (VVHY…MALL) and 227–324 (AICA…SRRD). Tyr307 is modified (phosphotyrosine). Disordered stretches follow at residues 327 to 357 (HLPPGPESFPGLQKPTQLVGRGRGSLSSNGR), 371 to 431 (QSLP…PLPL), 443 to 473 (LDSGPEAQDHSLDIPHSPLYADPYTPPATSR), and 493 to 610 (PGPD…IQWI). Polar residues-rich tracts occupy residues 371–380 (QSLPESSVPT) and 391–402 (NQTDSNCVSTGQ). Tyr462 carries the post-translational modification Phosphotyrosine. Low complexity predominate over residues 504-526 (VSVSVPVSESSSGISSSPGPLGS).

In terms of assembly, found in a complex with cytochrome c mRNA and various ribosomal proteins. Interacts with C1QBP, ELAVL1 and BID. In terms of processing, phosphorylation is essential for its mitochondrial localization and regulates its interaction with C1QBP. Testis and adipose tissue (at protein level). Ubiquitous.

The protein resides in the cell membrane. The protein localises to the mitochondrion membrane. It localises to the mitochondrion. Its function is as follows. Controls the stability of the leptin mRNA harboring an AU-rich element (ARE) in its 3' UTR, in cooperation with the RNA stabilizer ELAVL1. Decreases the stability of the leptin mRNA by antagonizing the function of ELAVL1 by inducing its atypical recruitment from the nucleus to the cytosol. Binds to cardiolipin (CL), phosphatidic acid (PA), phosphatidylinositol 4-phosphate (PtdIns(4)P) and phosphatidylserine (PS). This is Probable pleckstrin homology domain-containing family N member 1 (Plekhn1) from Mus musculus (Mouse).